We begin with the raw amino-acid sequence, 412 residues long: Squamosa promoter-binding-like protein 2 (412 aa).

The tract at residues 1-81 (MDWDAKMPSW…AAAAGKRARA (81 aa)) is disordered. The segment covering 18–31 (PSGGGGGGGGGGGA) has biased composition (gly residues). Composition is skewed to low complexity over residues 48–57 (VSAASAAPAA) and 67–81 (SSSS…RARA). The segment at 89–167 (VPACSVEGCA…DGHNKRRRKP (79 aa)) adopts an SBP-type zinc-finger fold. Zn(2+) is bound by residues Cys92, Cys97, Cys115, His118, Cys134, Cys137, His141, and Cys153. A Bipartite nuclear localization signal motif is present at residues 150–166 (KRSCRKRLDGHNKRRRK).

In terms of tissue distribution, expressed in stems, leaf sheaths, and young panicles.

The protein localises to the nucleus. Trans-acting factor that binds specifically to the consensus nucleotide sequence 5'-TNCGTACAA-3'. May be involved in panicle development. The protein is Squamosa promoter-binding-like protein 2 (SPL2) of Oryza sativa subsp. japonica (Rice).